The sequence spans 389 residues: MVSVSEIRKAQRAEGPATILAIGTANPANCVEQSTYPDFYFKITNSEHKTELKEKFQRMCDKSMIKRRYMYLTEEILKENPSVCEYMAPSLDARQDMVVVEVPRLGKEAAVKAIKEWGQPKSKITHLIVCTTSGVDMPGADYQLTKLLGLRPYVKRYMMYQQGCFAGGTVLRLAKDLAENNKGARVLVVCSEVTAVTFRGPSDTHLDSLVGQALFGDGAAALIVGSDPVPEIEKPIFEMVWTAQTIAPDSEGAIDGHLREAGLTFHLLKDVPGIVSKNIDKALVEAFQPLGISDYNSIFWIAHPGGPAILDQVEQKLALKPEKMRATREVLSEYGNMSSACVLFILDEMRKKSTQDGLKTTGEGLEWGVLFGFGPGLTIETVVLRSVAI.

Residue Cys-164 is part of the active site.

The protein belongs to the thiolase-like superfamily. Chalcone/stilbene synthases family.

The enzyme catalyses (E)-4-coumaroyl-CoA + 3 malonyl-CoA + 3 H(+) = 2',4,4',6'-tetrahydroxychalcone + 3 CO2 + 4 CoA. It functions in the pathway secondary metabolite biosynthesis; flavonoid biosynthesis. Its function is as follows. The primary product of this enzyme is 4,2',4',6'-tetrahydroxychalcone (also termed naringenin-chalcone or chalcone) which can under specific conditions spontaneously isomerize into naringenin. This is Chalcone synthase 4 (CHS4) from Medicago sativa (Alfalfa).